Consider the following 453-residue polypeptide: Glutamyl-tRNA reductase (453 aa).

Substrate is bound by residues T54 to R57, S113, E118 to Q120, and Q124. The active-site Nucleophile is C55. G193–S198 lines the NADP(+) pocket.

Belongs to the glutamyl-tRNA reductase family. As to quaternary structure, homodimer.

The catalysed reaction is (S)-4-amino-5-oxopentanoate + tRNA(Glu) + NADP(+) = L-glutamyl-tRNA(Glu) + NADPH + H(+). It functions in the pathway porphyrin-containing compound metabolism; protoporphyrin-IX biosynthesis; 5-aminolevulinate from L-glutamyl-tRNA(Glu): step 1/2. Its pathway is porphyrin-containing compound metabolism; chlorophyll biosynthesis. Its function is as follows. Catalyzes the NADPH-dependent reduction of glutamyl-tRNA(Glu) to glutamate 1-semialdehyde (GSA). The protein is Glutamyl-tRNA reductase of Chloroflexus aggregans (strain MD-66 / DSM 9485).